The following is a 548-amino-acid chain: MKKVTAMLFSMAVGLNAVSMAAKAKASEEQETDVLLIGGGIMSATLGTYLRELEPEWSMTMVERLEGVAQESSNGWNNAGTGHSALMELNYTPQNADGSISIEKAVAINEAFQISRQFWAHQVERGVLRTPRSFINTVPHMSFVWGEDNVNFLRARYAALQQSSLFRGMRYSEDHAQIKEWAPLVMEGRDPQQKVAATRTEIGTDVNYGEITRQLIASLQKKSNFSLQLSSEVRALKRNDDNTWTVTVADLKNGTAQNIRAKFVFIGAGGAALKLLQESGIPEAKDYAGFPVGGQFLVSENPDVVNHHLAKVYGKASVGAPPMSVPHIDTRVLDGKRVVLFGPFATFSTKFLKNGSLWDLMSSTTTSNVMPMMHVGLDNFDLVKYLVSQVMLSEEDRFEALKEYYPQAKKEDWRLWQAGQRVQIIKRDADKGGVLRLGTEVVSDQQGTIAALLGASPGASTAAPIMLNLLEKVFGDRVSSPQWQATLKAIVPSYGRKLNGDVAATERELQYTSEVLGLKYDKPQAVDSTPKPQLKPQLVQKEVADIAL.

It belongs to the MQO family. FAD serves as cofactor.

It catalyses the reaction (S)-malate + a quinone = a quinol + oxaloacetate. It functions in the pathway carbohydrate metabolism; tricarboxylic acid cycle; oxaloacetate from (S)-malate (quinone route): step 1/1. This Escherichia coli O6:H1 (strain CFT073 / ATCC 700928 / UPEC) protein is Probable malate:quinone oxidoreductase.